A 154-amino-acid polypeptide reads, in one-letter code: Small ribosomal subunit protein uS9 (154 aa).

Residues 133 to 154 (RAKESKKYGLKKARKAPQYSKR) form a disordered region. The segment covering 140–154 (YGLKKARKAPQYSKR) has biased composition (basic residues).

The protein belongs to the universal ribosomal protein uS9 family.

This is Small ribosomal subunit protein uS9 from Salinispora tropica (strain ATCC BAA-916 / DSM 44818 / JCM 13857 / NBRC 105044 / CNB-440).